The following is a 272-amino-acid chain: Proteasome subunit beta (272 aa).

A propeptide spans 1 to 47 (MSTGGDRLPEAFLRPGSSSFVEFLREVAPQSHPEHARPAGAGDVVHA) (removed in mature form; by autocatalysis). Threonine 48 functions as the Nucleophile in the catalytic mechanism.

Belongs to the peptidase T1B family. In terms of assembly, the 20S proteasome core is composed of 14 alpha and 14 beta subunits that assemble into four stacked heptameric rings, resulting in a barrel-shaped structure. The two inner rings, each composed of seven catalytic beta subunits, are sandwiched by two outer rings, each composed of seven alpha subunits. The catalytic chamber with the active sites is on the inside of the barrel. Has a gated structure, the ends of the cylinder being occluded by the N-termini of the alpha-subunits. Is capped by the proteasome-associated ATPase, ARC.

The protein resides in the cytoplasm. The catalysed reaction is Cleavage of peptide bonds with very broad specificity.. The protein operates within protein degradation; proteasomal Pup-dependent pathway. The formation of the proteasomal ATPase ARC-20S proteasome complex, likely via the docking of the C-termini of ARC into the intersubunit pockets in the alpha-rings, may trigger opening of the gate for substrate entry. Interconversion between the open-gate and close-gate conformations leads to a dynamic regulation of the 20S proteasome proteolysis activity. Component of the proteasome core, a large protease complex with broad specificity involved in protein degradation. In Beutenbergia cavernae (strain ATCC BAA-8 / DSM 12333 / CCUG 43141 / JCM 11478 / NBRC 16432 / NCIMB 13614 / HKI 0122), this protein is Proteasome subunit beta.